Consider the following 951-residue polypeptide: MSKTNKSKSGSRSSRSRSASRSRSRSFSKSRSRSRSVSRSRKRRLSSRSRSRSYSPAHNRERNHPRVYQNRDFRGHNRGYRRPYYFRGRNRGFYPWGQYNRGGYGNYRSNWQNYRQAYSPRRGRSRSRSPKRRSPSPRSRSHSRNSDKSSSDRSRRSSSSRSSSNHSRVESSKRKSTKEKKSSSKDSRPSQAAGDNQGDEAKEQTFSGGTSQDIKGSESSKPWPDATTYGAGSASRASVSDLSPRERSPALKSPLQSVVVRRRSPRPSPVPKPSPPLSNASQMGSSMSGGAGYQSGAHQGQFDHGSGSLSPSKKSPVGKSPPATGSAYGSSQKEESAASGGAAYSKRYLEEQKTENGKDKEQKQTNADKEKLKEKGGFSDADVKMKSDPFAPKTDSEKPFRGSQSPKRYKLRDDFEKKMADFHKEELDEHDKDKSKGRKEPEFDDEPKFMSKVIAGASKNQEEEKSGKWESLHTGKEKQRKAEEMEDEPFTERSRKEERGGSKRSESGHRGFVPEKNFRVTAYKAVQEKSSSPPPRKTSESRDKLGSKGDFSSGKSSFSITREAQVNVRMDSFDEDLARPSGLLAQERKLCRDLVHSNKKEQEFRSIFQHIQSAQSQRSPSELFAQHIVTIVHHVKEHHFGSSGMTLHERFTKYLKRGNEQEAAKNKKSPEIHRRIDISPSTFRKHGLTHEELKSPREPGYKAEGKYKDDPVDLRLDIERRKKHKERDLKRGKSRESVDSRDSSHSRERSTEKTEKTHKGSKKQKKHRRARDRSRSSSSSSQSSHSYKAEEYPEEAEEREESTSGFDKSRLGTKDFVGPNERGGRARGTFQFRARGRGWGRGNYSGNNNNNSNNDFQKRSREEEWDPEYTPKSKKYYLHDDREGEGSDKWMGRGRGRGAFPRGRGRFMFRKSSTSPKWAHDKFSGEEGEIEDDESGTENREEKDSLQPSAE.

Over residues 1-13 (MSKTNKSKSGSRS) the composition is skewed to low complexity. The disordered stretch occupies residues 1–94 (MSKTNKSKSG…YFRGRNRGFY (94 aa)). Ser-2 is modified (N-acetylserine). The interval 2-190 (SKTNKSKSGS…KSSSKDSRPS (189 aa)) is required for mRNA splicing activation. Over residues 14–51 (SRSRSASRSRSRSFSKSRSRSRSVSRSRKRRLSSRSRS) the composition is skewed to basic residues. Arg-17 is modified (dimethylated arginine). Over residues 58–75 (HNRERNHPRVYQNRDFRG) the composition is skewed to basic and acidic residues. Arg-66 carries the post-translational modification Asymmetric dimethylarginine. Residues 82 to 94 (RPYYFRGRNRGFY) are compositionally biased toward low complexity. Asymmetric dimethylarginine is present on residues Arg-101 and Arg-108. Residues 117–558 (AYSPRRGRSR…GDFSSGKSSF (442 aa)) form a disordered region. Residues 121 to 143 (RRGRSRSRSPKRRSPSPRSRSHS) show a composition bias toward basic residues. The segment covering 144–155 (RNSDKSSSDRSR) has biased composition (basic and acidic residues). The segment covering 157–166 (SSSSRSSSNH) has biased composition (low complexity). Positions 167 to 188 (SRVESSKRKSTKEKKSSSKDSR) are enriched in basic and acidic residues. Lys-202 is covalently cross-linked (Glycyl lysine isopeptide (Lys-Gly) (interchain with G-Cter in SUMO1); alternate). Lys-202 participates in a covalent cross-link: Glycyl lysine isopeptide (Lys-Gly) (interchain with G-Cter in SUMO2); alternate. Residues 204-220 (QTFSGGTSQDIKGSESS) are compositionally biased toward polar residues. Lys-215 is covalently cross-linked (Glycyl lysine isopeptide (Lys-Gly) (interchain with G-Cter in SUMO2)). Ser-220 is modified (phosphoserine). Residue Lys-221 forms a Glycyl lysine isopeptide (Lys-Gly) (interchain with G-Cter in SUMO2); alternate linkage. N6-acetyllysine; alternate is present on Lys-221. Phosphoserine is present on residues Ser-233, Ser-238, Ser-240, Ser-243, and Ser-248. Residue Lys-252 forms a Glycyl lysine isopeptide (Lys-Gly) (interchain with G-Cter in SUMO2); alternate linkage. The residue at position 252 (Lys-252) is an N6-methyllysine; alternate. Phosphoserine is present on residues Ser-253 and Ser-257. Residues 266 to 276 (RPSPVPKPSPP) are compositionally biased toward pro residues. Residues 305 to 322 (GSGSLSPSKKSPVGKSPP) show a composition bias toward low complexity. A phosphoserine mark is found at Ser-315 and Ser-320. Phosphothreonine is present on Thr-324. Ser-326 bears the Phosphoserine mark. A Phosphotyrosine modification is found at Tyr-328. Lys-333 participates in a covalent cross-link: Glycyl lysine isopeptide (Lys-Gly) (interchain with G-Cter in SUMO2). Residues 337 to 346 (AASGGAAYSK) show a composition bias toward low complexity. Ser-339 is subject to Phosphoserine. Lys-346 is covalently cross-linked (Glycyl lysine isopeptide (Lys-Gly) (interchain with G-Cter in SUMO2); alternate). Position 346 is an N6-acetyllysine; alternate (Lys-346). Residues 347-387 (RYLEEQKTENGKDKEQKQTNADKEKLKEKGGFSDADVKMKS) are compositionally biased toward basic and acidic residues. Residues Lys-353 and Lys-375 each participate in a glycyl lysine isopeptide (Lys-Gly) (interchain with G-Cter in SUMO2) cross-link. Residues 359-951 (DKEQKQTNAD…EKDSLQPSAE (593 aa)) form a required for mRNA decay activity region. Ser-379 is modified (phosphoserine). A Glycyl lysine isopeptide (Lys-Gly) (interchain with G-Cter in SUMO1); alternate cross-link involves residue Lys-384. Lys-384 participates in a covalent cross-link: Glycyl lysine isopeptide (Lys-Gly) (interchain with G-Cter in SUMO2); alternate. Residues Lys-386 and Lys-393 each participate in a glycyl lysine isopeptide (Lys-Gly) (interchain with G-Cter in SUMO2) cross-link. Thr-394 carries the phosphothreonine modification. Residue Lys-398 forms a Glycyl lysine isopeptide (Lys-Gly) (interchain with G-Cter in SUMO2) linkage. 2 positions are modified to phosphoserine: Ser-403 and Ser-405. Over residues 411 to 449 (LRDDFEKKMADFHKEELDEHDKDKSKGRKEPEFDDEPKF) the composition is skewed to basic and acidic residues. Glycyl lysine isopeptide (Lys-Gly) (interchain with G-Cter in SUMO2) cross-links involve residues Lys-418 and Lys-424. Residue Lys-448 forms a Glycyl lysine isopeptide (Lys-Gly) (interchain with G-Cter in SUMO1); alternate linkage. Residues Lys-448 and Lys-452 each participate in a glycyl lysine isopeptide (Lys-Gly) (interchain with G-Cter in SUMO2); alternate cross-link. Lys-452 carries the post-translational modification N6-acetyllysine; alternate. Residues Lys-459 and Lys-465 each participate in a glycyl lysine isopeptide (Lys-Gly) (interchain with G-Cter in SUMO2) cross-link. Basic and acidic residues-rich tracts occupy residues 460–483 (NQEEEKSGKWESLHTGKEKQRKAE) and 490–518 (FTERSRKEERGGSKRSESGHRGFVPEKNF). Ser-466 carries the post-translational modification Phosphoserine. Glycyl lysine isopeptide (Lys-Gly) (interchain with G-Cter in SUMO2); alternate cross-links involve residues Lys-468 and Lys-476. Residues Lys-468 and Lys-476 each carry the N6-acetyllysine; alternate modification. Lys-481 is covalently cross-linked (Glycyl lysine isopeptide (Lys-Gly) (interchain with G-Cter in SUMO2)). The residue at position 516 (Lys-516) is an N6-acetyllysine. Residue Lys-524 forms a Glycyl lysine isopeptide (Lys-Gly) (interchain with G-Cter in SUMO2); alternate linkage. Position 524 is an N6-acetyllysine; alternate (Lys-524). Ser-532 bears the Phosphoserine mark. A compositionally biased stretch (basic and acidic residues) spans 537–547 (KTSESRDKLGS). Lys-548 is covalently cross-linked (Glycyl lysine isopeptide (Lys-Gly) (interchain with G-Cter in SUMO2)). A compositionally biased stretch (low complexity) spans 548–558 (KGDFSSGKSSF). ATP is bound at residue 549 to 556 (GDFSSGKS). Lys-555 is covalently cross-linked (Glycyl lysine isopeptide (Lys-Gly) (interchain with G-Cter in SUMO2); alternate). Position 555 is an N6-acetyllysine; alternate (Lys-555). Residues Ser-557, Ser-559, and Ser-572 each carry the phosphoserine modification. Lys-599 participates in a covalent cross-link: Glycyl lysine isopeptide (Lys-Gly) (interchain with G-Cter in SUMO2). 5 positions are modified to phosphoserine: Ser-616, Ser-619, Ser-669, Ser-679, and Ser-681. Residues 660–677 (EQEAAKNKKSPEIHRRID) show a composition bias toward basic and acidic residues. The segment at 660–951 (EQEAAKNKKS…EKDSLQPSAE (292 aa)) is disordered. The span at 688-758 (LTHEELKSPR…RSTEKTEKTH (71 aa)) shows a compositional bias: basic and acidic residues. A Glycyl lysine isopeptide (Lys-Gly) (interchain with G-Cter in SUMO2) cross-link involves residue Lys-694. A Phosphoserine modification is found at Ser-695. Residues Lys-702, Lys-706, Lys-708, Lys-753, and Lys-756 each participate in a glycyl lysine isopeptide (Lys-Gly) (interchain with G-Cter in SUMO2) cross-link. Residues 759–772 (KGSKKQKKHRRARD) are compositionally biased toward basic residues. Over residues 776–786 (SSSSSSQSSHS) the composition is skewed to low complexity. Position 808 is an N6-acetyllysine (Lys-808). Position 841 is an asymmetric dimethylarginine (Arg-841). Residues 844-854 (YSGNNNNNSNN) show a composition bias toward low complexity. Ser-860 bears the Phosphoserine mark. Residue Thr-870 is modified to Phosphothreonine. Glycyl lysine isopeptide (Lys-Gly) (interchain with G-Cter in SUMO2) cross-links involve residues Lys-872 and Lys-875. Over residues 877-891 (YLHDDREGEGSDKWM) the composition is skewed to basic and acidic residues. 2 positions are modified to phosphoserine: Ser-924 and Ser-935. Residues 926 to 936 (EEGEIEDDESG) show a composition bias toward acidic residues.

The protein belongs to the BCLAF1/THRAP3 family. In terms of assembly, associated with the large multiprotein complex TRAP (Mediator complex-like). Interacts with SFPQ; the interaction is dependent on SFPQ phosphorylation at 'Thr-687' and inhibits binding of SFPQ to an ESS1 exonic splicing silencer element-containing RNA. Interacts with NXF1. Component of the SNARP complex which consists at least of SNIP1, SNW1, THRAP3, BCLAF1 and PNN. Associated with spliced mRNP complexes. Interacts with HELZ2 and PPARG. Interacts with CLOCK and BMAL1. Component of a MACOM-like complex, named WTAP complex, composed of WTAP, ZC3H13, CBLL1, KIAA1429, RBM15, BCLAF1 and THRAP3.

The protein resides in the nucleus. It is found in the nucleoplasm. Its subcellular location is the nucleus speckle. Its function is as follows. Involved in pre-mRNA splicing. Remains associated with spliced mRNA after splicing which probably involves interactions with the exon junction complex (EJC). Can trigger mRNA decay which seems to be independent of nonsense-mediated decay involving premature stop codons (PTC) recognition. May be involved in nuclear mRNA decay. Involved in regulation of signal-induced alternative splicing. During splicing of PTPRC/CD45 is proposed to sequester phosphorylated SFPQ from PTPRC/CD45 pre-mRNA in resting T-cells. Involved in cyclin-D1/CCND1 mRNA stability probably by acting as component of the SNARP complex which associates with both the 3'end of the CCND1 gene and its mRNA. Involved in response to DNA damage. Is excluced from DNA damage sites in a manner that parallels transcription inhibition; the function may involve the SNARP complex. Initially thought to play a role in transcriptional coactivation through its association with the TRAP complex; however, it is not regarded as a stable Mediator complex subunit. Cooperatively with HELZ2, enhances the transcriptional activation mediated by PPARG, maybe through the stabilization of the PPARG binding to DNA in presence of ligand. May play a role in the terminal stage of adipocyte differentiation. Plays a role in the positive regulation of the circadian clock. Acts as a coactivator of the CLOCK-BMAL1 heterodimer and promotes its transcriptional activator activity and binding to circadian target genes. This chain is Thyroid hormone receptor-associated protein 3 (Thrap3), found in Mus musculus (Mouse).